Here is a 432-residue protein sequence, read N- to C-terminus: Adenylosuccinate synthetase (432 aa).

Residues 13-19 (GDEGKGK) and 41-43 (GHT) contribute to the GTP site. D14 functions as the Proton acceptor in the catalytic mechanism. Mg(2+) is bound by residues D14 and G41. IMP-binding positions include 14–17 (DEGK), 39–42 (NAGH), T130, R144, Q225, T240, and R304. H42 acts as the Proton donor in catalysis. Position 300-306 (300-306 (ATTGRSR)) interacts with substrate. GTP-binding positions include R306, 332-334 (KLD), and 415-417 (STG).

Belongs to the adenylosuccinate synthetase family. In terms of assembly, homodimer. It depends on Mg(2+) as a cofactor.

Its subcellular location is the cytoplasm. The catalysed reaction is IMP + L-aspartate + GTP = N(6)-(1,2-dicarboxyethyl)-AMP + GDP + phosphate + 2 H(+). The protein operates within purine metabolism; AMP biosynthesis via de novo pathway; AMP from IMP: step 1/2. Plays an important role in the de novo pathway of purine nucleotide biosynthesis. Catalyzes the first committed step in the biosynthesis of AMP from IMP. This is Adenylosuccinate synthetase from Yersinia pseudotuberculosis serotype O:1b (strain IP 31758).